Reading from the N-terminus, the 282-residue chain is Protease HtpX homolog (282 aa).

The next 2 helical transmembrane spans lie at 6–26 (TLVLMVFLSVFFIFVGSLIGG) and 29–49 (GATFALIMALGMNFFAYFFSH). H130 serves as a coordination point for Zn(2+). The active site involves E131. Residue H134 coordinates Zn(2+). The next 2 membrane-spanning stretches (helical) occupy residues 140–160 (ILISTIAATIAGAISYLAQMA) and 180–200 (IVALLMMIIAPLIAMIIQLAI). Residue E205 participates in Zn(2+) binding.

Belongs to the peptidase M48B family. Requires Zn(2+) as cofactor.

It is found in the cell inner membrane. This Thermodesulfovibrio yellowstonii (strain ATCC 51303 / DSM 11347 / YP87) protein is Protease HtpX homolog.